Here is a 404-residue protein sequence, read N- to C-terminus: Type II restriction enzyme EcoRII (404 aa).

Residue Tyr308 is part of the active site.

As to quaternary structure, homodimer. The cofactor is Mg(2+).

It catalyses the reaction Endonucleolytic cleavage of DNA to give specific double-stranded fragments with terminal 5'-phosphates.. Its function is as follows. An E and P subtype restriction enzyme that recognizes the double-stranded sequence 5'-CCWGG-3' and cleaves before C-1. The polypeptide is Type II restriction enzyme EcoRII (ecoRIIR) (Escherichia coli).